The primary structure comprises 40 residues: SAALAGTIIAGASLGFQILDKVLGELGKVSRKIAVGVDNE.

The tract at residues 3-12 is plays an important role in the hemolytic activity; sequence ALAGTIIAGA. Residues 11 to 30 form an N-terminal region region; it reads GASLGFQILDKVLGELGKVS.

The protein belongs to the actinoporin family. Sea anemone subfamily. In terms of assembly, octamer or nonamer in membranes. Monomer in the soluble state.

The protein resides in the secreted. Its subcellular location is the nematocyst. The protein localises to the target cell membrane. Pore-forming protein that forms cations-selective hydrophilic pores of around 1 nm and causes cardiac stimulation and cytolysis. Pore formation is a multi-step process that involves specific recognition of membrane sphingomyelin (but neither cholesterol nor phosphatidylcholine) using aromatic rich region and adjacent phosphocholine (POC) binding site, firm binding to the membrane (mainly driven by hydrophobic interactions) accompanied by the transfer of the N-terminal region to the lipid-water interface and finally pore formation after oligomerization of monomers. This toxin shows hemolytic activities. This is Cytolysin SmT-1 from Stichodactyla mertensii (Merten's carpet sea anemone).